A 61-amino-acid chain; its full sequence is Small ribosomal subunit protein uS14 (61 aa).

Zn(2+) is bound by residues Cys24, Cys27, Cys40, and Cys43.

The protein belongs to the universal ribosomal protein uS14 family. Zinc-binding uS14 subfamily. Part of the 30S ribosomal subunit. Contacts proteins S3 and S10. The cofactor is Zn(2+).

In terms of biological role, binds 16S rRNA, required for the assembly of 30S particles and may also be responsible for determining the conformation of the 16S rRNA at the A site. In Mesoplasma florum (strain ATCC 33453 / NBRC 100688 / NCTC 11704 / L1) (Acholeplasma florum), this protein is Small ribosomal subunit protein uS14.